The primary structure comprises 408 residues: Arginine biosynthesis bifunctional protein ArgJ (408 aa).

Residues threonine 158, lysine 184, threonine 195, glutamate 281, asparagine 403, and threonine 408 each contribute to the substrate site. Threonine 195 functions as the Nucleophile in the catalytic mechanism.

Belongs to the ArgJ family. As to quaternary structure, heterotetramer of two alpha and two beta chains.

It localises to the cytoplasm. It catalyses the reaction N(2)-acetyl-L-ornithine + L-glutamate = N-acetyl-L-glutamate + L-ornithine. The catalysed reaction is L-glutamate + acetyl-CoA = N-acetyl-L-glutamate + CoA + H(+). The protein operates within amino-acid biosynthesis; L-arginine biosynthesis; L-ornithine and N-acetyl-L-glutamate from L-glutamate and N(2)-acetyl-L-ornithine (cyclic): step 1/1. Its pathway is amino-acid biosynthesis; L-arginine biosynthesis; N(2)-acetyl-L-ornithine from L-glutamate: step 1/4. Functionally, catalyzes two activities which are involved in the cyclic version of arginine biosynthesis: the synthesis of N-acetylglutamate from glutamate and acetyl-CoA as the acetyl donor, and of ornithine by transacetylation between N(2)-acetylornithine and glutamate. The polypeptide is Arginine biosynthesis bifunctional protein ArgJ (Bacillus cereus (strain ZK / E33L)).